Reading from the N-terminus, the 126-residue chain is Protein ApaG (126 aa).

Residues 2-126 enclose the ApaG domain; it reads TELETSIKID…FRLSIPGLLH (125 aa).

The chain is Protein ApaG from Shewanella woodyi (strain ATCC 51908 / MS32).